Reading from the N-terminus, the 262-residue chain is Flap endonuclease Xni (262 aa).

Residue D105 participates in Mg(2+) binding. In terms of domain architecture, 5'-3' exonuclease spans 164 to 251 (SQFLDLMALA…NINLKDFRAN (88 aa)). 5 residues coordinate K(+): L172, A173, P181, I183, and I186. Residues 185–190 (GIGPKS) form an interaction with DNA region.

The protein belongs to the Xni family. It depends on Mg(2+) as a cofactor. K(+) is required as a cofactor.

Has flap endonuclease activity. During DNA replication, flap endonucleases cleave the 5'-overhanging flap structure that is generated by displacement synthesis when DNA polymerase encounters the 5'-end of a downstream Okazaki fragment. The sequence is that of Flap endonuclease Xni from Shewanella sp. (strain W3-18-1).